Consider the following 443-residue polypeptide: Protein Z-dependent protease inhibitor (443 aa).

The N-terminal stretch at 1-23 (MKVVPSLLLSVLLAQVWLVPGLA) is a signal peptide. Residues 24-66 (PSPQSPETPAPQNQTSRVVQAPREEEEDEQEASEEKAGDEEKA) are disordered. The N-linked (GlcNAc...) asparagine glycan is linked to Asn-36. A Phosphoserine modification is found at Ser-56. Residues 56–66 (SEEKAGDEEKA) are compositionally biased toward basic and acidic residues. Residues 136 to 153 (TKPGLLPSLFKGLRETLS) are heparin-binding. Asn-180 and Asn-295 each carry an N-linked (GlcNAc...) asparagine glycan.

This sequence belongs to the serpin family. Phosphorylated by FAM20C in the extracellular medium.

Its subcellular location is the secreted. Inhibits activity of the coagulation protease factor Xa in the presence of PROZ, calcium and phospholipids. Also inhibits factor XIa in the absence of cofactors. The protein is Protein Z-dependent protease inhibitor (SERPINA10) of Pongo abelii (Sumatran orangutan).